A 138-amino-acid polypeptide reads, in one-letter code: Large ribosomal subunit protein bL17 (138 aa).

Belongs to the bacterial ribosomal protein bL17 family. In terms of assembly, part of the 50S ribosomal subunit. Contacts protein L32.

The chain is Large ribosomal subunit protein bL17 from Methylorubrum populi (strain ATCC BAA-705 / NCIMB 13946 / BJ001) (Methylobacterium populi).